Reading from the N-terminus, the 430-residue chain is Aspartate aminotransferase, mitochondrial (430 aa).

The transit peptide at 1–29 (MALLHSGRALPGIAAAFHPGLAAAASARA) directs the protein to the mitochondrion. Threonine 48 carries the phosphothreonine modification. N6-acetyllysine is present on lysine 59. Residue glycine 65 participates in substrate binding. Lysine 73 carries the N6-acetyllysine; alternate modification. Lysine 73 carries the N6-succinyllysine; alternate modification. Lysine 82 is modified (N6-acetyllysine). Lysine 90 is subject to N6-acetyllysine; alternate. Residue lysine 90 is modified to N6-succinyllysine; alternate. Tyrosine 96 is modified (3'-nitrotyrosine; alternate). The residue at position 96 (tyrosine 96) is a Phosphotyrosine; alternate. Lysine 107 and lysine 122 each carry N6-acetyllysine; alternate. An N6-succinyllysine; alternate mark is found at lysine 107 and lysine 122. Serine 143 carries the post-translational modification Phosphoserine. Position 159 is an N6-acetyllysine; alternate (lysine 159). Lysine 159 carries the post-translational modification N6-succinyllysine; alternate. Residue tryptophan 162 coordinates substrate. Lysine 185 is modified (N6-acetyllysine; alternate). Lysine 185 carries the post-translational modification N6-succinyllysine; alternate. Asparagine 215 lines the substrate pocket. N6-succinyllysine is present on lysine 227. At lysine 234 the chain carries N6-acetyllysine. N6-acetyllysine; alternate occurs at positions 279 and 296. Lysine 279 carries the post-translational modification N6-(pyridoxal phosphate)lysine; alternate. Position 296 is an N6-succinyllysine; alternate (lysine 296). N6-acetyllysine is present on lysine 302. An N6-acetyllysine; alternate modification is found at lysine 309. The residue at position 309 (lysine 309) is an N6-succinyllysine; alternate. Position 313 is an asymmetric dimethylarginine (arginine 313). Residue threonine 333 is modified to Phosphothreonine. Position 338 is an N6-acetyllysine; alternate (lysine 338). N6-succinyllysine; alternate is present on lysine 338. Lysine 345 bears the N6-acetyllysine mark. Lysine 363 carries the post-translational modification N6-acetyllysine; alternate. Lysine 363 carries the post-translational modification N6-succinyllysine; alternate. 2 positions are modified to N6-acetyllysine: lysine 364 and lysine 387. 2 positions are modified to N6-acetyllysine; alternate: lysine 396 and lysine 404. Residues lysine 396 and lysine 404 each carry the N6-succinyllysine; alternate modification. Residue arginine 407 coordinates substrate.

This sequence belongs to the class-I pyridoxal-phosphate-dependent aminotransferase family. Homodimer. Pyridoxal 5'-phosphate serves as cofactor.

The protein resides in the mitochondrion matrix. The protein localises to the cell membrane. It catalyses the reaction L-aspartate + 2-oxoglutarate = oxaloacetate + L-glutamate. It carries out the reaction L-kynurenine + 2-oxoglutarate = kynurenate + L-glutamate + H2O. In terms of biological role, catalyzes the irreversible transamination of the L-tryptophan metabolite L-kynurenine to form kynurenic acid (KA). As a member of the malate-aspartate shuttle, it has a key role in the intracellular NAD(H) redox balance. Is important for metabolite exchange between mitochondria and cytosol, and for amino acid metabolism. Facilitates cellular uptake of long-chain free fatty acids. In Pongo abelii (Sumatran orangutan), this protein is Aspartate aminotransferase, mitochondrial (GOT2).